The primary structure comprises 175 residues: Disulfide bond formation protein B (175 aa).

At 1 to 13 the chain is on the cytoplasmic side; it reads MTAFTRFAHSRAS. The chain crosses the membrane as a helical span at residues 14–30; sequence WLILTGSAIALEAAALY. Residues 31-48 lie on the Periplasmic side of the membrane; sequence FQYVMKLDPCVMCIYQRL. Cys40 and Cys43 are oxidised to a cystine. Residues 49 to 64 traverse the membrane as a helical segment; that stretch reads AVFGILAAGLIGMTAP. Residues 65 to 71 lie on the Cytoplasmic side of the membrane; it reads KYRIVRI. Residues 72 to 89 traverse the membrane as a helical segment; sequence LGALGWAVSATWGLKLAL. The Periplasmic segment spans residues 90–144; the sequence is ALVDMQNNPSPFSTCSFLPEFPAWMPLHEWFPSVMLPTGMCTDVPWQFMGVTMAE. A disulfide bridge connects residues Cys104 and Cys130. The chain crosses the membrane as a helical span at residues 145–163; sequence WMVVAFSGYLVALLLFIVP. The Cytoplasmic segment spans residues 164-175; sequence ILSGSNKPSLYK.

This sequence belongs to the DsbB family.

Its subcellular location is the cell inner membrane. Required for disulfide bond formation in some periplasmic proteins. Acts by oxidizing the DsbA protein. The protein is Disulfide bond formation protein B of Shewanella sp. (strain MR-4).